The sequence spans 267 residues: DNA repair protein RecO (267 aa).

Belongs to the RecO family.

In terms of biological role, involved in DNA repair and RecF pathway recombination. The sequence is that of DNA repair protein RecO from Mesoplasma florum (strain ATCC 33453 / NBRC 100688 / NCTC 11704 / L1) (Acholeplasma florum).